We begin with the raw amino-acid sequence, 601 residues long: NADH-quinone oxidoreductase subunit C/D (601 aa).

The tract at residues 1-191 is NADH dehydrogenase I subunit C; that stretch reads MKLTRDFPSN…DPFMLDAAKQ (191 aa). The segment at 215–601 is NADH dehydrogenase I subunit D; it reads DYMFLNLGPN…IDFVMSDVDR (387 aa).

The protein in the N-terminal section; belongs to the complex I 30 kDa subunit family. It in the C-terminal section; belongs to the complex I 49 kDa subunit family. NDH-1 is composed of 13 different subunits. Subunits NuoB, CD, E, F, and G constitute the peripheral sector of the complex.

Its subcellular location is the cell inner membrane. It catalyses the reaction a quinone + NADH + 5 H(+)(in) = a quinol + NAD(+) + 4 H(+)(out). Functionally, NDH-1 shuttles electrons from NADH, via FMN and iron-sulfur (Fe-S) centers, to quinones in the respiratory chain. The immediate electron acceptor for the enzyme in this species is believed to be ubiquinone. Couples the redox reaction to proton translocation (for every two electrons transferred, four hydrogen ions are translocated across the cytoplasmic membrane), and thus conserves the redox energy in a proton gradient. The sequence is that of NADH-quinone oxidoreductase subunit C/D from Aeromonas salmonicida (strain A449).